Consider the following 282-residue polypeptide: Pantothenate synthetase (282 aa).

30 to 37 (MGYLHEGH) lines the ATP pocket. His37 functions as the Proton donor in the catalytic mechanism. Gln61 is a binding site for (R)-pantoate. Gln61 contributes to the beta-alanine binding site. 147–150 (GQKD) contacts ATP. Gln153 provides a ligand contact to (R)-pantoate. Residues Val176 and 184–187 (MSSR) contribute to the ATP site.

Belongs to the pantothenate synthetase family. In terms of assembly, homodimer.

Its subcellular location is the cytoplasm. It carries out the reaction (R)-pantoate + beta-alanine + ATP = (R)-pantothenate + AMP + diphosphate + H(+). It functions in the pathway cofactor biosynthesis; (R)-pantothenate biosynthesis; (R)-pantothenate from (R)-pantoate and beta-alanine: step 1/1. Its function is as follows. Catalyzes the condensation of pantoate with beta-alanine in an ATP-dependent reaction via a pantoyl-adenylate intermediate. In Caldicellulosiruptor bescii (strain ATCC BAA-1888 / DSM 6725 / KCTC 15123 / Z-1320) (Anaerocellum thermophilum), this protein is Pantothenate synthetase.